The chain runs to 445 residues: Chromosome partition protein MukF (445 aa).

Positions 213–241 are leucine-zipper; it reads LSETSSTLRELQDTLQAASDELQTQILDI.

Belongs to the MukF family. Interacts, and probably forms a ternary complex, with MukE and MukB via its C-terminal region. The complex formation is stimulated by calcium or magnesium. It is required for an interaction between MukE and MukB.

It is found in the cytoplasm. The protein resides in the nucleoid. In terms of biological role, involved in chromosome condensation, segregation and cell cycle progression. May participate in facilitating chromosome segregation by condensation DNA from both sides of a centrally located replisome during cell division. Not required for mini-F plasmid partitioning. Probably acts via its interaction with MukB and MukE. Overexpression results in anucleate cells. It has a calcium binding activity. This is Chromosome partition protein MukF from Vibrio campbellii (strain ATCC BAA-1116).